The following is an 87-amino-acid chain: CRISPR-associated endoribonuclease Cas2 (87 aa).

Aspartate 8 provides a ligand contact to Mg(2+).

The protein belongs to the CRISPR-associated endoribonuclease Cas2 protein family. In terms of assembly, homodimer, forms a heterotetramer with a Cas1 homodimer. The cofactor is Mg(2+).

Its function is as follows. CRISPR (clustered regularly interspaced short palindromic repeat), is an adaptive immune system that provides protection against mobile genetic elements (viruses, transposable elements and conjugative plasmids). CRISPR clusters contain sequences complementary to antecedent mobile elements and target invading nucleic acids. CRISPR clusters are transcribed and processed into CRISPR RNA (crRNA). Functions as a ssRNA-specific endoribonuclease. Involved in the integration of spacer DNA into the CRISPR cassette. This chain is CRISPR-associated endoribonuclease Cas2, found in Frankia alni (strain DSM 45986 / CECT 9034 / ACN14a).